Consider the following 304-residue polypeptide: MQEPKNSQTLHDVANGASDLEGPLAWVGMEDIALPFRLANSAVNGRASAGVSLDATSARGIHMSRLYLALEALEHEEVTLSGLGAVLQRFLASHDGLARTAFLDLSGDVLIKRPALISPRAGWKAYPCALRCRQDTQGMQAVLEVTIGYSSTCPCSAALARQSIQQAFDEDFTDMPISHEAVRTWLGSEQGILATPHSQRSQAHLSLRLADDLETLPVTALIDTVEDALGTALQTAVKRVDEQAFALANGQNLMFCEDAARRVRHALQARDEVQGFRVRIVHAESLHAHDAVAHAEWNWTPNSP.

Belongs to the GTP cyclohydrolase IV family.

It carries out the reaction GTP + H2O = 7,8-dihydroneopterin 3'-triphosphate + formate + H(+). It participates in cofactor biosynthesis; 7,8-dihydroneopterin triphosphate biosynthesis; 7,8-dihydroneopterin triphosphate from GTP: step 1/1. Functionally, converts GTP to 7,8-dihydroneopterin triphosphate. This is GTP cyclohydrolase FolE2 from Chromohalobacter salexigens (strain ATCC BAA-138 / DSM 3043 / CIP 106854 / NCIMB 13768 / 1H11).